Reading from the N-terminus, the 447-residue chain is Cytochrome c biogenesis protein CcsB (447 aa).

A run of 3 helical transmembrane segments spans residues 28 to 48 (LRLA…GTVI), 87 to 107 (TWWY…CTFR), and 173 to 193 (IGPI…IWGA).

Belongs to the Ccs1/CcsB family. May interact with CcsA.

It is found in the cellular thylakoid membrane. Its function is as follows. Required during biogenesis of c-type cytochromes (cytochrome c6 and cytochrome f) at the step of heme attachment. The protein is Cytochrome c biogenesis protein CcsB of Microcystis aeruginosa (strain NIES-843 / IAM M-2473).